Here is a 545-residue protein sequence, read N- to C-terminus: CTP synthase (545 aa).

The interval 1-267 (MTKFIFVTGG…AEQVLNLLQM (267 aa)) is amidoligase domain. S13 is a CTP binding site. S13 serves as a coordination point for UTP. ATP contacts are provided by residues 14 to 19 (SIGKGI) and D71. Residues D71 and E141 each contribute to the Mg(2+) site. Residues 148-150 (DIE), 188-193 (KTKPTQ), and K224 each bind CTP. Residues 188-193 (KTKPTQ) and K224 contribute to the UTP site. Residues 292–534 (EIAIVGKYVQ…IQAAIALSLS (243 aa)) enclose the Glutamine amidotransferase type-1 domain. An L-glutamine-binding site is contributed by G354. The Nucleophile; for glutamine hydrolysis role is filled by C381. Residues 382-385 (LGMQ), E405, and R462 each bind L-glutamine. Residues H507 and E509 contribute to the active site.

Belongs to the CTP synthase family. In terms of assembly, homotetramer.

The catalysed reaction is UTP + L-glutamine + ATP + H2O = CTP + L-glutamate + ADP + phosphate + 2 H(+). The enzyme catalyses L-glutamine + H2O = L-glutamate + NH4(+). It catalyses the reaction UTP + NH4(+) + ATP = CTP + ADP + phosphate + 2 H(+). It functions in the pathway pyrimidine metabolism; CTP biosynthesis via de novo pathway; CTP from UDP: step 2/2. Its activity is regulated as follows. Allosterically activated by GTP, when glutamine is the substrate; GTP has no effect on the reaction when ammonia is the substrate. The allosteric effector GTP functions by stabilizing the protein conformation that binds the tetrahedral intermediate(s) formed during glutamine hydrolysis. Inhibited by the product CTP, via allosteric rather than competitive inhibition. Catalyzes the ATP-dependent amination of UTP to CTP with either L-glutamine or ammonia as the source of nitrogen. Regulates intracellular CTP levels through interactions with the four ribonucleotide triphosphates. This chain is CTP synthase, found in Nostoc punctiforme (strain ATCC 29133 / PCC 73102).